A 149-amino-acid polypeptide reads, in one-letter code: Putative mediator of RNA polymerase II transcription subunit 22 (149 aa).

Belongs to the Mediator complex subunit 22 family. In terms of assembly, component of the Mediator complex.

Its subcellular location is the nucleus. Its function is as follows. Component of the Mediator complex, a coactivator involved in the regulated transcription of nearly all RNA polymerase II-dependent genes. Mediator functions as a bridge to convey information from gene-specific regulatory proteins to the basal RNA polymerase II transcription machinery. Mediator is recruited to promoters by direct interactions with regulatory proteins and serves as a scaffold for the assembly of a functional preinitiation complex with RNA polymerase II and the general transcription factors. The sequence is that of Putative mediator of RNA polymerase II transcription subunit 22 (med22) from Dictyostelium discoideum (Social amoeba).